A 105-amino-acid chain; its full sequence is MSKLHIKKGDTVYVNAGEDKGKTGRVLKVLVKEGRAIVEGINMVSKSTKPNAKNPQGGIVKQEASIHISNLNPVDPKTGKATRIGRRKSSEGTLVRYSKKSGEEI.

Residues 67-105 (HISNLNPVDPKTGKATRIGRRKSSEGTLVRYSKKSGEEI) are disordered.

It belongs to the universal ribosomal protein uL24 family. Part of the 50S ribosomal subunit.

Functionally, one of two assembly initiator proteins, it binds directly to the 5'-end of the 23S rRNA, where it nucleates assembly of the 50S subunit. In terms of biological role, one of the proteins that surrounds the polypeptide exit tunnel on the outside of the subunit. The polypeptide is Large ribosomal subunit protein uL24 (Bacteroides thetaiotaomicron (strain ATCC 29148 / DSM 2079 / JCM 5827 / CCUG 10774 / NCTC 10582 / VPI-5482 / E50)).